We begin with the raw amino-acid sequence, 330 residues long: Protein ANTHESIS POMOTING FACTOR 1 (330 aa).

WD repeat units follow at residues 22 to 61 (DFGGKIHSVGFHRTDDLLVTSSEDDSLRLFDIANAKQLKI), 112 to 151 (GHKDRVVSLCMSPINDSFMSGSLDRSVRLWDLRVNACQGI), 153 to 191 (HLRGRPAVAYDQQGLVFAIAMEGGAVKLFDSRCYDKGPF), 198 to 237 (GDTAEVNDIKFSNDGKSMLLTTTNNNIYVLDAYRGEKKCG), 242 to 281 (PSQGTPIEATFTPDGKYVLSGSGDGTLHAWNIENPSEVAR), and 284 to 323 (NNIGVVSCLKWAPRRAMFVAASTVLTFWIPNDGESPAPAD).

This sequence belongs to the WD repeat SWD2 family. In terms of tissue distribution, expressed in the shoot apical meristem (SAM), embryos, seedlings, cotyledons, leaves primordia, young leaves and roots.

The protein localises to the nucleus. Component of a chromatin regulatory complex involved in regulating chromatin structure in the nucleus. Promotes flowering under long days (LD) via the regulation of bolting. This is Protein ANTHESIS POMOTING FACTOR 1 from Arabidopsis thaliana (Mouse-ear cress).